A 100-amino-acid chain; its full sequence is Urease subunit gamma (100 aa).

Belongs to the urease gamma subunit family. Heterotrimer of UreA (gamma), UreB (beta) and UreC (alpha) subunits. Three heterotrimers associate to form the active enzyme.

It localises to the cytoplasm. It catalyses the reaction urea + 2 H2O + H(+) = hydrogencarbonate + 2 NH4(+). It participates in nitrogen metabolism; urea degradation; CO(2) and NH(3) from urea (urease route): step 1/1. The polypeptide is Urease subunit gamma (Thermosynechococcus vestitus (strain NIES-2133 / IAM M-273 / BP-1)).